The sequence spans 265 residues: Cytochrome c oxidase subunit 3 (265 aa).

Transmembrane regions (helical) follow at residues 16 to 36 (PWPISGSLGALATTVGGVMYM), 41 to 61 (GGATLLSLGLIFILYTMFVWW), 81 to 101 (GPRYGSISFIVSEVMFLFAFF), 137 to 157 (TPILLSSGAAVTWAHHAILAG), 162 to 182 (AVYALVATVSLALVFTGFQGM), 200 to 220 (FFLATGFHGFHVIIGTLFLII), and 245 to 265 (WHFVDVVRLFPFVSIYWWGGI).

It belongs to the cytochrome c oxidase subunit 3 family. Component of the cytochrome c oxidase (complex IV, CIV), a multisubunit enzyme composed of a catalytic core of 3 subunits and several supernumerary subunits. The complex exists as a monomer or a dimer and forms supercomplexes (SCs) in the inner mitochondrial membrane with ubiquinol-cytochrome c oxidoreductase (cytochrome b-c1 complex, complex III, CIII).

It localises to the mitochondrion inner membrane. The catalysed reaction is 4 Fe(II)-[cytochrome c] + O2 + 8 H(+)(in) = 4 Fe(III)-[cytochrome c] + 2 H2O + 4 H(+)(out). Functionally, component of the cytochrome c oxidase, the last enzyme in the mitochondrial electron transport chain which drives oxidative phosphorylation. The respiratory chain contains 3 multisubunit complexes succinate dehydrogenase (complex II, CII), ubiquinol-cytochrome c oxidoreductase (cytochrome b-c1 complex, complex III, CIII) and cytochrome c oxidase (complex IV, CIV), that cooperate to transfer electrons derived from NADH and succinate to molecular oxygen, creating an electrochemical gradient over the inner membrane that drives transmembrane transport and the ATP synthase. Cytochrome c oxidase is the component of the respiratory chain that catalyzes the reduction of oxygen to water. Electrons originating from reduced cytochrome c in the intermembrane space (IMS) are transferred via the dinuclear copper A center (CU(A)) of subunit 2 and heme A of subunit 1 to the active site in subunit 1, a binuclear center (BNC) formed by heme A3 and copper B (CU(B)). The BNC reduces molecular oxygen to 2 water molecules using 4 electrons from cytochrome c in the IMS and 4 protons from the mitochondrial matrix. This is Cytochrome c oxidase subunit 3 (COX3) from Vicia faba (Broad bean).